We begin with the raw amino-acid sequence, 95 residues long: Protein GOLVEN 9 (95 aa).

The first 24 residues, 1–24, serve as a signal peptide directing secretion; the sequence is MKKTSLKLMTLVLGFCFVIYLLQG. Residues 25–73 constitute a propeptide that is removed on maturation; sequence PRGGSRNGDLLIARKLISLEPIETKNAARSLKDSISTDLEEEVDRLMEH. Residues 72-95 form a disordered region; that stretch reads EHEYPSPVKPRKRTPVHNGVRNRH. Position 75 is a sulfotyrosine (Tyr75). Residues 80 to 95 show a composition bias toward basic residues; it reads KPRKRTPVHNGVRNRH. Pro86 is modified (hydroxyproline). A propeptide spanning residues 90-95 is cleaved from the precursor; sequence GVRNRH.

This sequence belongs to the RGF family. In terms of assembly, binds to LRR receptor-like serine/threonine-protein kinases to trigger their dimerization with SERK proteins and subsequent signaling. As to expression, expressed in roots.

The protein localises to the secreted. Signaling peptide (root growth factor) required during root gravitropism in a PIN2-traffic dependent manner. Regulates the pattern of root growth and lateral root development by modulating the length and the number of cortical cells in the root apical meristem (RAM), and the anticlinal asymmetric cell divisions in lateral root initiation cells. This is Protein GOLVEN 9 from Arabidopsis thaliana (Mouse-ear cress).